Here is a 65-residue protein sequence, read N- to C-terminus: U11-theraphotoxin-Cg1b (65 aa).

An N-terminal signal peptide occupies residues Met-1–Ala-21. A propeptide spanning residues Thr-22–Arg-29 is cleaved from the precursor. 3 disulfide bridges follow: Cys-31/Cys-45, Cys-38/Cys-50, and Cys-44/Cys-57.

Belongs to the neurotoxin 10 (Hwtx-1) family. 32 (Jztx-16) subfamily. Expressed by the venom gland.

It localises to the secreted. Functionally, probable ion channel inhibitor. This chain is U11-theraphotoxin-Cg1b, found in Chilobrachys guangxiensis (Chinese earth tiger tarantula).